We begin with the raw amino-acid sequence, 482 residues long: MKFIIKLFPEITIKSQSVRLRFIKILTGNIRNVLKHYDETLAVVRHWDNIEVRARDENQRLAIRDALTRIPGIHHILEVEDVPFTDMHDIFEKALVQYRDRLEGKTFCVRVKRRGKHEFSSIEVERYVGGGLNQHIESARVKLTNPDVTVHLEVEDDRLLLIKGRYEGIGGFPIGTQEDVLSLISGGFDSGVSSYMLMRRGCRVHYCFFNLGGAAHEIGVRQVAHYLWNRFGSSHRVRFVAINFEPVVGEILEKVDDGQMGVVLKRMMVRAASKVAERYGVQALVTGEALGQVSSQTLTNLRLIDNVSDTLILRPLISYDKEHIINLARQIGTEDFARTMPEYCGVISKSPTVKAIKAKIEAEEEHFDFSILDKVVEEASNVDIREIAQQTGQDVVEVETVSGFGPNDVILDIRSVDEQDDKPLKIEGVDVVSLPFYKLSTKFGDLDQSKTWLLWCERGVMSRLQALYLREQGFQNVKVYRP.

The THUMP domain maps to 61–165 (LAIRDALTRI…DDRLLLIKGR (105 aa)). ATP contacts are provided by residues 183–184 (LI), Lys265, Gly287, and Gln296. The cysteines at positions 344 and 456 are disulfide-linked. Residues 404–482 (FGPNDVILDI…GFQNVKVYRP (79 aa)) form the Rhodanese domain. Cys456 functions as the Cysteine persulfide intermediate in the catalytic mechanism.

It belongs to the ThiI family.

Its subcellular location is the cytoplasm. The catalysed reaction is [ThiI sulfur-carrier protein]-S-sulfanyl-L-cysteine + a uridine in tRNA + 2 reduced [2Fe-2S]-[ferredoxin] + ATP + H(+) = [ThiI sulfur-carrier protein]-L-cysteine + a 4-thiouridine in tRNA + 2 oxidized [2Fe-2S]-[ferredoxin] + AMP + diphosphate. It carries out the reaction [ThiS sulfur-carrier protein]-C-terminal Gly-Gly-AMP + S-sulfanyl-L-cysteinyl-[cysteine desulfurase] + AH2 = [ThiS sulfur-carrier protein]-C-terminal-Gly-aminoethanethioate + L-cysteinyl-[cysteine desulfurase] + A + AMP + 2 H(+). It functions in the pathway cofactor biosynthesis; thiamine diphosphate biosynthesis. Catalyzes the ATP-dependent transfer of a sulfur to tRNA to produce 4-thiouridine in position 8 of tRNAs, which functions as a near-UV photosensor. Also catalyzes the transfer of sulfur to the sulfur carrier protein ThiS, forming ThiS-thiocarboxylate. This is a step in the synthesis of thiazole, in the thiamine biosynthesis pathway. The sulfur is donated as persulfide by IscS. In Citrobacter koseri (strain ATCC BAA-895 / CDC 4225-83 / SGSC4696), this protein is tRNA sulfurtransferase.